The sequence spans 132 residues: Large-conductance mechanosensitive channel (132 aa).

2 helical membrane-spanning segments follow: residues 14–34 (VIDL…VSSL) and 67–87 (GNFI…FMFV).

Belongs to the MscL family. Homopentamer.

It localises to the cell membrane. Its function is as follows. Channel that opens in response to stretch forces in the membrane lipid bilayer. May participate in the regulation of osmotic pressure changes within the cell. The protein is Large-conductance mechanosensitive channel of Bacillus cereus (strain AH820).